The following is an 88-amino-acid chain: Small ribosomal subunit protein bS20 (88 aa).

The span at 1-10 shows a compositional bias: basic residues; the sequence is MANHKSSLKR. The segment at 1-24 is disordered; that stretch reads MANHKSSLKRAKQDIVRNTRNKSR.

The protein belongs to the bacterial ribosomal protein bS20 family.

Functionally, binds directly to 16S ribosomal RNA. This is Small ribosomal subunit protein bS20 from Desulfosudis oleivorans (strain DSM 6200 / JCM 39069 / Hxd3) (Desulfococcus oleovorans).